A 4467-amino-acid polypeptide reads, in one-letter code: Protocadherin-like protein (4467 aa).

Residues 1 to 22 (MRGINAIVGFLLCFCLLHRINT) form the signal peptide. Cadherin domains follow at residues 23–128 (AVQF…SPTF), 129–238 (PQHL…SPVF), 239–350 (EKKS…VPVF), 351–455 (QEES…TPVF), 459–566 (NPQQ…NPDF), 567–664 (SKVV…PPTF), 665–764 (KNAP…PPTF), 765–884 (SRSS…SPEF), 885–994 (SQTS…PPLF), 1092–1197 (EAQP…QPRF), 1290–1395 (SRTV…SPKF), 1396–1499 (SADS…PPKF), 1495–1597 (GPPK…EPQF), 1601–1701 (SNGF…QPVR), 1793–1891 (TMID…KPQF), 1892–1992 (SESA…YPKF), 1993–2100 (EPNL…KPQF), 2101–2202 (LESD…RPVF), 2203–2312 (TDCP…FPFF), 2313–2423 (LTRT…PPAF), 2425–2529 (PSAV…TPTF), 2530–2639 (KLEE…PPIF), 2640–2746 (PKPS…IPKF), 2747–2849 (DNLI…SPYF), 2850–2954 (PNPP…APVF), 2955–3062 (NPRE…PPVF), 3063–3170 (VPAE…GPWF), and 3173–3288 (RYYE…EPFD). Topologically, residues 23-4258 (AVQFKQEILE…RPSSRWANPA (4236 aa)) are extracellular. In terms of domain architecture, EGF-like 1 spans 3551–3589 (PDINCTTGTPCLHGGTCHNAVPKGIICECGRDYLGPECQ). Disulfide bonds link Cys-3555–Cys-3567, Cys-3561–Cys-3577, Cys-3579–Cys-3588, Cys-3762–Cys-3788, Cys-3794–Cys-3803, Cys-3797–Cys-3812, and Cys-3814–Cys-3823. The region spanning 3590-3788 (STTRTFRGNS…LKEVNTELGC (199 aa)) is the Laminin G-like 1 domain. The EGF-like 2 domain maps to 3790 to 3824 (LNNQCPNCNGRGYCEPFWNYAICVCDLGFGGANCD). Residues 3842 to 4096 (VKQVKRKRRE…KVIISSSGGS (255 aa)) enclose the Laminin G-like 2 domain. A disordered region spans residues 4089-4118 (IISSSGGSVSGGSGGASGGSGGASGSGGSV). Over residues 4096–4118 (SVSGGSGGASGGSGGASGSGGSV) the composition is skewed to gly residues. Residues 4206-4238 (PCGSNFCRHGGTCVSADPPYCLCPVGWSGPVCE) enclose the EGF-like 3 domain. 3 disulfides stabilise this stretch: Cys-4207-Cys-4218, Cys-4212-Cys-4226, and Cys-4228-Cys-4237. Residues 4259-4279 (VIACILVILLAILVIIGAVLL) traverse the membrane as a helical segment. At 4280-4467 (KRRPQPAVVA…NLNRIFNEDE (188 aa)) the chain is on the cytoplasmic side. The tract at residues 4424-4445 (DVDDLSELGDSDEEPDEEEEQE) is disordered.

In terms of tissue distribution, component of the acid-insoluble organic matrix of the aragonitic skeleton (at protein level).

Its subcellular location is the membrane. In Acropora millepora (Staghorn coral), this protein is Protocadherin-like protein.